Here is a 195-residue protein sequence, read N- to C-terminus: Large ribosomal subunit protein eL15 (195 aa).

The disordered stretch occupies residues 174 to 195 (GHGRLGSAKSRPSIRANGRLRR).

This sequence belongs to the eukaryotic ribosomal protein eL15 family.

The chain is Large ribosomal subunit protein eL15 from Picrophilus torridus (strain ATCC 700027 / DSM 9790 / JCM 10055 / NBRC 100828 / KAW 2/3).